A 2028-amino-acid chain; its full sequence is Protein Daple (2028 aa).

In terms of domain architecture, Calponin-homology (CH) spans 11-131; sequence LFLQSPLVTW…KVLLLVLGCA (121 aa). Positions 222-250 are disordered; it reads AQHPPSPIKSSSADSTPSPTSSLSSEDKQ. Residues S227 and S239 each carry the phosphoserine modification. Residues 229 to 245 show a composition bias toward low complexity; sequence IKSSSADSTPSPTSSLS. Coiled-coil stretches lie at residues 247–428, 456–1017, 1045–1094, and 1139–1393; these read EDKQ…SMNE, ELNE…QGEG, HKEA…SSQI, and LQNH…DQYK. S486 bears the Phosphoserine mark. A compositionally biased stretch (polar residues) spans 1011–1024; the sequence is RQNQGEGQHLQNSF. Residues 1011–1043 form a disordered region; sequence RQNQGEGQHLQNSFKHPAGKTAASHQGKEAWGP. The span at 1419-1428 shows a compositional bias: basic and acidic residues; that stretch reads KEGSRERLKS. 2 disordered regions span residues 1419 to 1724 and 1736 to 1803; these read KEGS…GAKM and AAPT…SLSR. 3 stretches are compositionally biased toward low complexity: residues 1439 to 1450, 1517 to 1534, and 1568 to 1588; these read SSDPASPAASQP, SRTCSTSATTTAPSNSTP, and SRPSSLESSRNTSSNSSPLNL. Residue S1444 is modified to Phosphoserine. Residues 1589-1604 are compositionally biased toward polar residues; that stretch reads KGSSEQLHGRSESFSS. S1601 bears the Phosphoserine mark. Positions 1661–1691 match the GBA motif; that stretch reads CSASPSSEMVTLEEFLEESNRSSPTHDTPSC. A compositionally biased stretch (basic and acidic residues) spans 1689-1704; that stretch reads PSCRDDLLSDYFRKAS. Residues 1792-1803 are compositionally biased toward low complexity; that stretch reads HAPASRSASLSR. S1806 carries the post-translational modification Phosphoserine. A disordered region spans residues 1816-2021; that stretch reads SGPEACKQES…PEPGGDPQTV (206 aa). The segment covering 1842–1855 has biased composition (polar residues); the sequence is SHTLQSPAPPSSHS. Positions 1879-1897 are enriched in basic and acidic residues; the sequence is RPLDTRRFSLAPPKEERLA. Residues 1902–1924 are compositionally biased toward low complexity; it reads SATAPAIATAGAGAAAAGSGSNS. T1954 carries the post-translational modification Phosphothreonine. Residues 2025–2028 carry the PDZ-binding motif; that stretch reads YGCV. Residues 2026 to 2028 are DVL1-binding; that stretch reads GCV.

The protein belongs to the CCDC88 family. In terms of assembly, homooligomer. Interacts with DVL1 (via PDZ domain); dissociates following initiation of non-canonical Wnt signaling. Interacts (via C-terminus) with ligand-activated Wnt receptor FZD7; competes with DVL1 for binding to FZD7 and displaces DVL1 from ligand-activated FZD7. Interacts (via GBA motif) with guanine nucleotide-binding protein G(i) alpha subunits GNAI1, GNAI2 and GNAI3 (inactive GDP-bound form); interacts with higher affinity with GNAI1 and GNAI3 than with GNAI2 and interaction leads to G(i) alpha subunit activation. Does not interact with GNAO1.

Its subcellular location is the cytoplasm. It is found in the cell junction. Its function is as follows. Required for activation of guanine nucleotide-binding proteins (G-proteins) during non-canonical Wnt signaling. Binds to ligand-activated Wnt receptor FZD7, displacing DVL1 from the FZD7 receptor and leading to inhibition of canonical Wnt signaling. Acts as a non-receptor guanine nucleotide exchange factor by also binding to guanine nucleotide-binding protein G(i) alpha (Gi-alpha) subunits, leading to their activation. Binding to Gi-alpha subunits displaces the beta and gamma subunits from the heterotrimeric G-protein complex, triggering non-canonical Wnt responses such as activation of RAC1 and PI3K-AKT signaling. Promotes apical constriction of cells via ARHGEF18. In Homo sapiens (Human), this protein is Protein Daple (CCDC88C).